The following is a 503-amino-acid chain: Interferon regulatory factor 7 (503 aa).

A DNA-binding region (IRF tryptophan pentad repeat) is located at residues 11–126; it reads RVLFGEWLLG…DPHKVYALSR (116 aa). The disordered stretch occupies residues 69 to 88; that stretch reads RWPPSSRGGGPPPEAETAER. Lys92 bears the N6-acetyllysine; by KAT2A and KAT2B mark. 2 disordered regions span residues 133–156 and 242–277; these read GPGTDQTEAEAPAAVPPPQGGPPG and TTPSPGPQPAALTTGEAAAPESPHQAEPYLSPSPSA. Residues 146–156 are compositionally biased toward pro residues; the sequence is AVPPPQGGPPG. The necessary for the interaction with NMI stretch occupies residues 284–456; that stretch reads PSPGALDVTI…SLVLVKLEPW (173 aa). Lys375 participates in a covalent cross-link: Glycyl lysine isopeptide (Lys-Gly) (interchain with G-Cter in ubiquitin). Glycyl lysine isopeptide (Lys-Gly) (interchain with G-Cter in SUMO) cross-links involve residues Lys444 and Lys446. Ser471, Ser472, and Ser475 each carry phosphoserine. 2 positions are modified to phosphoserine; by TBK1 and IKKE: Ser477 and Ser479. Phosphoserine is present on residues Ser483, Ser484, and Ser487.

Belongs to the IRF family. Monomer. Homodimer; phosphorylation-induced. Heterodimer with IRF3. Interacts with TICAM1 and TICAM2. Interacts with MYD88 and TRAF6. Interacts with TRIM35. Interacts with NMI; the interaction is direct and leads to the inhibition of IRF7-mediated type I IFN production. Interacts with GBP4; preventing interaction between TRAF6 and IRF7, resulting in impaired TRAF6-mediated IRF7 ubiquitination. As to quaternary structure, (Microbial infection) Interacts with Epstein-Barr virus LF2 and LMP1. In terms of assembly, (Microbial infection) Interacts with rotavirus A NSP1; this interaction leads to the proteasome-dependent degradation of IRF7. (Microbial infection) Interacts with human herpes virus 8/HHV-8 proteins ORF45 and vIRF-1. As to quaternary structure, (Microbial infection) Interacts with human T-cell leukemia virus 1/HTLV-1 protein HBZ. In terms of assembly, (Microbial infection) Interacts with Seneca Valley virus protease 3C; this interaction is involved in the suppression of IRF7 expression and phosphorylation by the virus. (Microbial infection) Interacts with ebolavirus VP35; this interaction mediates the sumoylation of IRF7 and contributes to the viral inhibition of IFN-type I production. As to quaternary structure, (Microbial infection) Interacts with severe fever with thrombocytopenia syndrome virus (SFTSV) NSs; this interaction sequesters IRF7 in NSs-induced cytoplasmic inclusion bodies. In terms of assembly, (Microbial infection) Interacts with herpes virus 8/HHV-8 protein vIRF-4; this interaction prevents IRF7 dimerization and subsequent activation. (Microbial infection) Interacts with human metapneumovirus protein M2-2; this interaction prevents IRF7 phosphorlyation and subsequent TLR7/9-dependent IFN-alpha induction. Post-translationally, acetylation inhibits its DNA-binding ability and activity. In terms of processing, in response to a viral infection, phosphorylated on Ser-477 and Ser-479 by TBK1 and IKBKE1. Phosphorylation, and subsequent activation is inhibited by vaccinia virus protein E3. In TLR7- and TLR9-mediated signaling pathway, phosphorylated by IRAK1. TRAF6-mediated ubiquitination is required for IRF7 activation. TRIM35 mediates IRF7 'Lys-48'-linked polyubiquitination and subsequent proteasomal degradation. Ubiquitinated by UBE3C, leading to its degradation. Post-translationally, sumoylated by TRIM28, which inhibits its transactivation activity. In terms of processing, (Microbial infection) Cleaved and inactivated by the protease 3C of enterovirus 71 allowing the virus to disrupt the host type I interferon production. (Microbial infection) Cleaved and inactivated by the protease 3C of human enterovirus 68D (EV68) allowing the virus to disrupt the host type I interferon production. Post-translationally, 'Lys-48'-linked polyubiquitination and subsequent proteasomal degradation is NMI-dependent in response to Sendai virus infection. In terms of processing, 'Lys-63'-linked ubiquitination by NEURL3 promotes IRF7 activation. In terms of tissue distribution, expressed predominantly in spleen, thymus and peripheral blood leukocytes.

It is found in the nucleus. It localises to the cytoplasm. With respect to regulation, in the absence of viral infection, maintained as a monomer in an autoinhibited state and phosphorylation disrupts this autoinhibition leading to the liberation of the DNA-binding and dimerization activities and its nuclear localization where it can activate type I IFN and ISG genes. Functionally, key transcriptional regulator of type I interferon (IFN)-dependent immune responses and plays a critical role in the innate immune response against DNA and RNA viruses. Regulates the transcription of type I IFN genes (IFN-alpha and IFN-beta) and IFN-stimulated genes (ISG) by binding to an interferon-stimulated response element (ISRE) in their promoters. Can efficiently activate both the IFN-beta (IFNB) and the IFN-alpha (IFNA) genes and mediate their induction via both the virus-activated, MyD88-independent pathway and the TLR-activated, MyD88-dependent pathway. Induces transcription of ubiquitin hydrolase USP25 mRNA in response to lipopolysaccharide (LPS) or viral infection in a type I IFN-dependent manner. Required during both the early and late phases of the IFN gene induction but is more critical for the late than for the early phase. Exists in an inactive form in the cytoplasm of uninfected cells and following viral infection, double-stranded RNA (dsRNA), or toll-like receptor (TLR) signaling, becomes phosphorylated by IKBKE and TBK1 kinases. This induces a conformational change, leading to its dimerization and nuclear localization where along with other coactivators it can activate transcription of the type I IFN and ISG genes. Can also play a role in regulating adaptive immune responses by inducing PSMB9/LMP2 expression, either directly or through induction of IRF1. Binds to the Q promoter (Qp) of EBV nuclear antigen 1 a (EBNA1) and may play a role in the regulation of EBV latency. Can activate distinct gene expression programs in macrophages and regulate the anti-tumor properties of primary macrophages. In Homo sapiens (Human), this protein is Interferon regulatory factor 7 (IRF7).